A 436-amino-acid chain; its full sequence is Probable mediator of RNA polymerase II transcription subunit 26b (436 aa).

A disordered region spans residues 71–111 (PGDDEANRGTTGNGGGGTAVDEDYEVAGGSKESKANSSRGD). A TFIIS N-terminal domain is found at 139–214 (KEVARIKEIL…AEWKELVDQW (76 aa)). The tract at residues 263–376 (HFFDSLDFDG…PQQEKLKGLD (114 aa)) is disordered. Composition is skewed to basic and acidic residues over residues 276–290 (NSEE…ERRP) and 332–350 (TEQR…EKPM). A coiled-coil region spans residues 382–402 (EFAKRKLQESYQHHENAKKQR). The tract at residues 408 to 436 (EMIPKQGSAQKPQLKRPGMSNRNWANGRK) is disordered. Positions 427-436 (SNRNWANGRK) are enriched in polar residues.

This sequence belongs to the Mediator complex subunit 26 family. Component of the Mediator complex.

The protein localises to the nucleus. Functionally, component of the Mediator complex, a coactivator involved in the regulated transcription of nearly all RNA polymerase II-dependent genes. Mediator functions as a bridge to convey information from gene-specific regulatory proteins to the basal RNA polymerase II transcription machinery. The Mediator complex, having a compact conformation in its free form, is recruited to promoters by direct interactions with regulatory proteins and serves for the assembly of a functional preinitiation complex with RNA polymerase II and the general transcription factors. May play a role in transcription elongation. The protein is Probable mediator of RNA polymerase II transcription subunit 26b (MED26B) of Arabidopsis thaliana (Mouse-ear cress).